The following is a 441-amino-acid chain: Protein C-ets-1 (441 aa).

K8 and K15 each carry N6-acetyllysine; alternate. Glycyl lysine isopeptide (Lys-Gly) (interchain with G-Cter in SUMO2); alternate cross-links involve residues K8 and K15. T38 bears the Phosphothreonine; by MAPK mark. Residues 51–136 (ATFSGFTKEQ…EHLEILQKED (86 aa)) form the PNT domain. The activation domain; required for transcription activation stretch occupies residues 130–243 (EILQKEDVKP…DNMCMGRTSR (114 aa)). A Glycyl lysine isopeptide (Lys-Gly) (interchain with G-Cter in SUMO2) cross-link involves residue K138. Y223 is subject to Phosphotyrosine. Residue K227 forms a Glycyl lysine isopeptide (Lys-Gly) (interchain with G-Cter in SUMO) linkage. Phosphoserine occurs at positions 251 and 254. A Phosphothreonine modification is found at T265. 4 positions are modified to phosphoserine: S267, S270, S282, and S285. The interval 304-312 (FKDYVRDRA) is helix HI-1. K305 bears the N6-acetyllysine mark. Positions 323-330 (AAALAGYT) are helix HI-2. Positions 335–415 (IQLWQFLLEL…AGKRYVYRFV (81 aa)) form a DNA-binding region, ETS. The interval 418–422 (LQSLL) is helix H4. Positions 426–432 (PEELHAM) are helix H5.

The protein belongs to the ETS family. Binds DNA as a homodimer; homodimerization is required for transcription activation. Interacts with MAF and MAFB. Interacts with PAX5; the interaction alters DNA-binding properties. Interacts with DAXX. Interacts with UBE2I. Interacts with SP100; the interaction is direct and modulates ETS1 transcriptional activity. Sumoylated on Lys-15 and Lys-227, preferentially with SUMO2; which inhibits transcriptional activity. Post-translationally, ubiquitinated; which induces proteasomal degradation. In terms of processing, phosphorylation at Ser-251, Ser-282 and Ser-285 by CaMK2/CaMKII in response to calcium signaling decreases affinity for DNA: an increasing number of phosphoserines causes DNA-binding to become progressively weaker. As to expression, highly expressed within lymphoid cells. Isoforms c-ETS-1A and Ets-1 p27 are both detected in all fetal tissues tested, but vary with tissue type in adult tissues. None is detected in brain or kidney.

Its subcellular location is the nucleus. The protein localises to the cytoplasm. With respect to regulation, autoinhibited by a module composed of four alpha helices (HI-1, HI-2, H4, and H5) that flank the DNA-binding ETS domain, reducing the affinity for DNA. Phosphorylation by CaMK2/CaMKII in response to calcium signaling decreases affinity for DNA. Functionally, transcription factor. Directly controls the expression of cytokine and chemokine genes in a wide variety of different cellular contexts. May control the differentiation, survival and proliferation of lymphoid cells. May also regulate angiogenesis through regulation of expression of genes controlling endothelial cell migration and invasion. Acts as a dominant-negative for isoform c-ETS-1A. This is Protein C-ets-1 (ETS1) from Homo sapiens (Human).